The following is a 623-amino-acid chain: ATP-dependent lipid A-core flippase (623 aa).

5 helical membrane passes run 66-86, 103-123, 190-210, 290-310, and 317-337; these read LVLAVLLMAGAAATQPTLAVI, VWFLPLAVVGLILLRGICNFF, LVVIALIGVLLYMSWALTLII, LTPLTQVCISVAVGAVIAVAL, and ALTVGSFASFMAALAQIFDPI. Positions 67–349 constitute an ABC transmembrane type-1 domain; that stretch reads VLAVLLMAGA…LTNLAGKMQK (283 aa). An ABC transporter domain is found at 382–618; that stretch reads VEFRAVSHRF…NGLYASLYNM (237 aa). Residue 416–423 coordinates ATP; that stretch reads GRSGSGKT.

It belongs to the ABC transporter superfamily. Lipid exporter (TC 3.A.1.106) family. In terms of assembly, homodimer.

Its subcellular location is the cell inner membrane. It carries out the reaction ATP + H2O + lipid A-core oligosaccharideSide 1 = ADP + phosphate + lipid A-core oligosaccharideSide 2.. In terms of biological role, involved in lipopolysaccharide (LPS) biosynthesis. Translocates lipid A-core from the inner to the outer leaflet of the inner membrane. Transmembrane domains (TMD) form a pore in the inner membrane and the ATP-binding domain (NBD) is responsible for energy generation. The polypeptide is ATP-dependent lipid A-core flippase (Bordetella pertussis (strain Tohama I / ATCC BAA-589 / NCTC 13251)).